Reading from the N-terminus, the 941-residue chain is Cilia- and flagella-associated protein 69 (941 aa).

A compositionally biased stretch (low complexity) spans 1-14 (MWTEEAGATAEAQE). Positions 1 to 26 (MWTEEAGATAEAQESGIRNKSSSSSQ) are disordered. A compositionally biased stretch (polar residues) spans 16-26 (GIRNKSSSSSQ).

In terms of tissue distribution, highly expressed in the testis, specifically in sperm (at protein level). Expressed in the brain, kidney, liver, lung, and intestine.

It localises to the cell projection. Its subcellular location is the cilium. It is found in the flagellum. In terms of biological role, cilium- and flagellum-associated protein. In the olfactory epithelium, regulates the speed of activation and termination of the odor response and thus contributes to the robustness of olfactory transduction pathways. Required for sperm flagellum assembly and stability. The sequence is that of Cilia- and flagella-associated protein 69 from Homo sapiens (Human).